Consider the following 125-residue polypeptide: Cu-Zn superoxide dismutase-like protein (125 aa).

Residues C52 and C102 are joined by a disulfide bond.

Belongs to the Cu-Zn superoxide dismutase family.

The protein resides in the host cytoplasm. Functionally, virion protein with no enzymatic activity. This is Cu-Zn superoxide dismutase-like protein from Mus musculus (Mouse).